Here is a 489-residue protein sequence, read N- to C-terminus: Glycogen synthase (489 aa).

Residue lysine 15 coordinates ADP-alpha-D-glucose.

The protein belongs to the glycosyltransferase 1 family. Bacterial/plant glycogen synthase subfamily.

It catalyses the reaction [(1-&gt;4)-alpha-D-glucosyl](n) + ADP-alpha-D-glucose = [(1-&gt;4)-alpha-D-glucosyl](n+1) + ADP + H(+). It functions in the pathway glycan biosynthesis; glycogen biosynthesis. Functionally, synthesizes alpha-1,4-glucan chains using ADP-glucose. The sequence is that of Glycogen synthase from Francisella tularensis subsp. mediasiatica (strain FSC147).